The following is a 138-amino-acid chain: Acid shock protein (138 aa).

The N-terminal stretch at 1 to 21 (MKKVLALIVAATMGLSSVAFA) is a signal peptide. Positions 22 to 85 (ADAVAPAAAA…TKKAPAQKAQ (64 aa)) are excised as a propeptide. The segment covering 31 to 50 (APAATTTAAPAAAATKAPAK) has biased composition (low complexity). Residues 31–138 (APAATTTAAP…ATKKAAPAAK (108 aa)) are disordered. Composition is skewed to basic residues over residues 51 to 77 (ATHHKKAHKKAPAQKAQAAKKHHKATK) and 122 to 131 (AAKKHHKATK).

It belongs to the Asr family. Post-translationally, proteolytic processing gives rise to the active protein.

The protein resides in the periplasm. Its function is as follows. Required for growth and/or survival at acidic conditions. The sequence is that of Acid shock protein from Serratia proteamaculans (strain 568).